Reading from the N-terminus, the 255-residue chain is uncharacterized protein (255 aa).

An N-terminal signal peptide occupies residues 1–22; sequence MNILSPIIIIIILIVLFYVMRM.

This is an uncharacterized protein from Acanthamoeba polyphaga (Amoeba).